A 430-amino-acid polypeptide reads, in one-letter code: Delta-aminolevulinic acid dehydratase 1, chloroplastic (430 aa).

The N-terminal 52 residues, 1–52 (MATTPIFNASCSFPSTRGIDCKSYIGLRSNVSKVSVASSRIATSQRRNLVVR), are a transit peptide targeting the chloroplast. A compositionally biased stretch (pro residues) spans 82 to 91 (EAPPVPPKPA). Positions 82 to 101 (EAPPVPPKPAAPVGTPIIKP) are disordered. Lys298 serves as the catalytic Schiff-base intermediate with substrate. Arg308 and Lys320 together coordinate 5-aminolevulinate. Glu336 serves as a coordination point for Mg(2+). Lys351 functions as the Schiff-base intermediate with substrate in the catalytic mechanism. Positions 377 and 416 each coordinate 5-aminolevulinate.

This sequence belongs to the ALAD family. As to quaternary structure, homooctamer. Requires Mg(2+) as cofactor. In terms of tissue distribution, highly expressed in cotyledons during dark-to-light transition.

The protein localises to the plastid. Its subcellular location is the chloroplast. The enzyme catalyses 2 5-aminolevulinate = porphobilinogen + 2 H2O + H(+). It participates in porphyrin-containing compound metabolism; protoporphyrin-IX biosynthesis; coproporphyrinogen-III from 5-aminolevulinate: step 1/4. The protein operates within porphyrin-containing compound metabolism; chlorophyll biosynthesis. In terms of biological role, catalyzes an early step in the biosynthesis of tetrapyrroles. Binds two molecules of 5-aminolevulinate per subunit, each at a distinct site, and catalyzes their condensation to form porphobilinogen. The chain is Delta-aminolevulinic acid dehydratase 1, chloroplastic (HEMB1) from Arabidopsis thaliana (Mouse-ear cress).